A 234-amino-acid chain; its full sequence is Uridylate kinase (234 aa).

Lysine 9–glycine 12 provides a ligand contact to ATP. Position 51 (glycine 51) interacts with UMP. Residues glycine 52 and arginine 56 each coordinate ATP. UMP is bound by residues aspartate 71 and cysteine 132 to threonine 139. Positions 159, 165, and 168 each coordinate ATP.

This sequence belongs to the UMP kinase family. As to quaternary structure, homohexamer.

The protein resides in the cytoplasm. It catalyses the reaction UMP + ATP = UDP + ADP. It participates in pyrimidine metabolism; CTP biosynthesis via de novo pathway; UDP from UMP (UMPK route): step 1/1. Inhibited by UTP. Functionally, catalyzes the reversible phosphorylation of UMP to UDP. This chain is Uridylate kinase, found in Prochlorococcus marinus (strain MIT 9301).